We begin with the raw amino-acid sequence, 178 residues long: Ribosome maturation factor RimM (178 aa).

Residues 95–174 form the PRC barrel domain; the sequence is EGQHFWFNVI…IVHVKDAKDI (80 aa).

It belongs to the RimM family. In terms of assembly, binds ribosomal protein uS19.

The protein localises to the cytoplasm. An accessory protein needed during the final step in the assembly of 30S ribosomal subunit, possibly for assembly of the head region. Essential for efficient processing of 16S rRNA. May be needed both before and after RbfA during the maturation of 16S rRNA. It has affinity for free ribosomal 30S subunits but not for 70S ribosomes. This chain is Ribosome maturation factor RimM, found in Sulfurovum sp. (strain NBC37-1).